Here is a 369-residue protein sequence, read N- to C-terminus: tRNA/tmRNA (uracil-C(5))-methyltransferase (369 aa).

S-adenosyl-L-methionine is bound by residues glutamine 193, tyrosine 221, asparagine 226, glutamate 242, and aspartate 302. The active-site Nucleophile is cysteine 327. Residue glutamate 361 is the Proton acceptor of the active site.

It belongs to the class I-like SAM-binding methyltransferase superfamily. RNA M5U methyltransferase family. TrmA subfamily.

It catalyses the reaction uridine(54) in tRNA + S-adenosyl-L-methionine = 5-methyluridine(54) in tRNA + S-adenosyl-L-homocysteine + H(+). It carries out the reaction uridine(341) in tmRNA + S-adenosyl-L-methionine = 5-methyluridine(341) in tmRNA + S-adenosyl-L-homocysteine + H(+). Dual-specificity methyltransferase that catalyzes the formation of 5-methyluridine at position 54 (m5U54) in all tRNAs, and that of position 341 (m5U341) in tmRNA (transfer-mRNA). The polypeptide is tRNA/tmRNA (uracil-C(5))-methyltransferase (Actinobacillus succinogenes (strain ATCC 55618 / DSM 22257 / CCUG 43843 / 130Z)).